The following is a 371-amino-acid chain: Cytochrome b (371 aa).

Helical transmembrane passes span 25-45, 69-90, 105-125, and 170-190; these read FGSM…FLAV, WLMQ…YTHI, WLSG…GYVL, and FFAL…LHIM. 2 residues coordinate heme b: His-75 and His-89. Heme b contacts are provided by His-174 and His-188. His-193 provides a ligand contact to a ubiquinone. 4 consecutive transmembrane segments (helical) span residues 218 to 238, 280 to 300, 312 to 332, and 339 to 358; these read YKDM…VAFF, LGGA…PFTH, IMQF…WAAT, and FTAI…ITNP.

This sequence belongs to the cytochrome b family. As to quaternary structure, the cytochrome bc1 complex contains 3 respiratory subunits (MT-CYB, CYC1 and UQCRFS1), 2 core proteins (UQCRC1 and UQCRC2) and probably 6 low-molecular weight proteins. Heme b is required as a cofactor.

It localises to the mitochondrion inner membrane. Its function is as follows. Component of the ubiquinol-cytochrome c reductase complex (complex III or cytochrome b-c1 complex) that is part of the mitochondrial respiratory chain. The b-c1 complex mediates electron transfer from ubiquinol to cytochrome c. Contributes to the generation of a proton gradient across the mitochondrial membrane that is then used for ATP synthesis. The protein is Cytochrome b (MT-CYB) of Eryx colubrinus loveridgei.